The sequence spans 245 residues: Aliphatic sulfonates import ATP-binding protein SsuB (245 aa).

In terms of domain architecture, ABC transporter spans 6–225 (VTVRGLRRAF…SRGDEGFDDL (220 aa)). 38-45 (GLSGSGKS) provides a ligand contact to ATP.

Belongs to the ABC transporter superfamily. Aliphatic sulfonates importer (TC 3.A.1.17.2) family. As to quaternary structure, the complex is composed of two ATP-binding proteins (SsuB), two transmembrane proteins (SsuC) and a solute-binding protein (SsuA).

The protein localises to the cell membrane. The catalysed reaction is ATP + H2O + aliphatic sulfonate-[sulfonate-binding protein]Side 1 = ADP + phosphate + aliphatic sulfonateSide 2 + [sulfonate-binding protein]Side 1.. Its function is as follows. Part of the ABC transporter complex SsuABC involved in aliphatic sulfonates import. Responsible for energy coupling to the transport system. The polypeptide is Aliphatic sulfonates import ATP-binding protein SsuB (Mycobacterium sp. (strain MCS)).